The primary structure comprises 93 residues: UPF0369 protein RC0209 (93 aa).

The tract at residues 1–24 is disordered; that stretch reads MDDKKDNRHLSKPAYREECTGDTE. Residues 8-55 form the RPE1 insert domain; that stretch reads RHLSKPAYREECTGDTERSTTAYMDILEDVSTGSTSKLPLEAKFVKIS.

Belongs to the SDHAF4 family.

The polypeptide is UPF0369 protein RC0209 (Rickettsia conorii (strain ATCC VR-613 / Malish 7)).